The primary structure comprises 203 residues: Small ribosomal subunit protein uS4 (203 aa).

The S4 RNA-binding domain occupies 93–153 (RRLDNVVYRL…EKSKNLQQVK (61 aa)).

The protein belongs to the universal ribosomal protein uS4 family. In terms of assembly, part of the 30S ribosomal subunit. Contacts protein S5. The interaction surface between S4 and S5 is involved in control of translational fidelity.

One of the primary rRNA binding proteins, it binds directly to 16S rRNA where it nucleates assembly of the body of the 30S subunit. Its function is as follows. With S5 and S12 plays an important role in translational accuracy. The sequence is that of Small ribosomal subunit protein uS4 from Lactobacillus delbrueckii subsp. bulgaricus (strain ATCC 11842 / DSM 20081 / BCRC 10696 / JCM 1002 / NBRC 13953 / NCIMB 11778 / NCTC 12712 / WDCM 00102 / Lb 14).